A 1024-amino-acid chain; its full sequence is MTMITDSLAVVLQRRDWENPGVTQLNRLAAHPPFASWRNSEEARTDRPSQQLRSLNGEWRFAWFPAPEAVPESWLECDLPDADTIVVPSNWQMHGYDAPIYTNVTYPITVNPPFVPVENPTGCYSLTFNVDESWLQEGQTRIIFDGVNSAFHLWCNGRWVGYGQDSRLPSEFDLSAFLRAGENRLAVMVLRWSDGSYLEDQDMWRMSGIFRDVSLLHKPTTQISDFHVATRFNDDFSRAVLEAEVQMCGELRDELRVTVSLWQGETQVASGTTPFGGEIIDERGGYADRVTLRLNVENPALWSAEIPNLYRAVVKLHTADGTLIEAEACDVGFREVRIENGLLLLNGKPLLIRGVNRHEHHPLHGQVMDEQTMVQDILLMKQNNFNAVRCSHYPNHPLWYTLCDRYGLYVVDEANIETHGMVPMNRLTDDPRWLPAMSERVTRMVQRDRNHPSVIIWSLGNESGHGANHDALYRWIKSVDPSRPVQYEGGGADTSATDIICPMYARVDEDQPFPAVPKWSIKKWLSLPGELRPLILCEYAHAMGNSLGGFAKYWQAFRQYPRLQGGFVWDWVDQSLIKYDENGNPWSAYGGDFGDTPNDRQFCMNGLVFADRTPHPALTEAKHQQQFFQFRLSGRTIEVTSEYLFRHSDNELLHWTVALDGKPLASGEVPLDVAPQGKQVIELPVLPQPESTGQLWLTVHVVQPNATAWSEAGHISAWHQWRLAENLSVTLPAASHSIPHLTTSEMDFCIELGNKRWQFNRQSGFLSQMWIGDEKQLLTPLRAQFTRAPLDNDIGVSEATRIDPNAWVERWKAAGHYQAEAALLQCTADTLADAVLITTAHAWQHQGKTLFISRKTYRIDGSGQMAITVDVEVASDTPHPARIGLTCQLAQVAERVNWLGLGPQENYPDRLTAACFDRWDLPLSDMYTPYVFPSENGLRCGTRELNYGPHQWRGDFQFNISRYSQQQLMETSHRHLLHAEEGTWLNIDGFHMGIGGDDSWSPSVSAEFQLSAGRYHYQLVWCQK.

Asn-103 and Asp-202 together coordinate substrate. Na(+) is bound at residue Asp-202. Positions 417, 419, and 462 each coordinate Mg(2+). Substrate-binding positions include Glu-462 and 538 to 541 (EYAH). Catalysis depends on Glu-462, which acts as the Proton donor. The active-site Nucleophile is the Glu-538. Asn-598 serves as a coordination point for Mg(2+). Phe-602 and Asn-605 together coordinate Na(+). Substrate is bound by residues Asn-605 and Trp-1000.

This sequence belongs to the glycosyl hydrolase 2 family. Homotetramer. Requires Mg(2+) as cofactor. The cofactor is Na(+).

The enzyme catalyses Hydrolysis of terminal non-reducing beta-D-galactose residues in beta-D-galactosides.. The polypeptide is Beta-galactosidase (Escherichia coli O17:K52:H18 (strain UMN026 / ExPEC)).